Here is an 894-residue protein sequence, read N- to C-terminus: Exocyst complex component 1 (894 aa).

2 coiled-coil regions span residues 152–199 (GDEE…LQVL) and 205–259 (QSIM…NHLI). The segment at 437–495 (SKESKKFATLPRKESAVKQETESLHGSSGKLTGSTSSLNKLSVQSSGSRRSQSSSLLDM) is disordered. The segment covering 438-459 (KESKKFATLPRKESAVKQETES) has biased composition (basic and acidic residues). The span at 460-491 (LHGSSGKLTGSTSSLNKLSVQSSGSRRSQSSS) shows a compositional bias: low complexity. Residue serine 470 is modified to Phosphoserine. Threonine 471 is subject to Phosphothreonine. A phosphoserine mark is found at serine 473, serine 487, and serine 501.

This sequence belongs to the SEC3 family. In terms of assembly, the exocyst complex is composed of EXOC1, EXOC2, EXOC3, EXOC4, EXOC5, EXOC6, EXOC7 and EXOC8. Interacts with EEF1A1. Interacts with SLC6A9; interaction increases the transporter capacity of SLC6A9 probably by promoting its insertion into the cell membrane.

It localises to the midbody. Its subcellular location is the midbody ring. It is found in the cytoplasm. The protein localises to the perinuclear region. The protein resides in the cell membrane. Its function is as follows. Component of the exocyst complex involved in the docking of exocytic vesicles with fusion sites on the plasma membrane. This Mus musculus (Mouse) protein is Exocyst complex component 1 (Exoc1).